A 391-amino-acid polypeptide reads, in one-letter code: Carbamoyl phosphate synthase small chain (391 aa).

Residues 1–189 (MIKSALLVLE…DLPAAKQPED (189 aa)) form a CPSase region. Residues serine 47, glycine 241, and glycine 243 each coordinate L-glutamine. In terms of domain architecture, Glutamine amidotransferase type-1 spans 193–380 (HVVAYDYGVK…IELIEAYRAS (188 aa)). The active-site Nucleophile is cysteine 269. Residues leucine 270, glutamine 273, asparagine 311, glycine 313, and phenylalanine 314 each contribute to the L-glutamine site. Catalysis depends on residues histidine 353 and glutamate 355.

It belongs to the CarA family. In terms of assembly, composed of two chains; the small (or glutamine) chain promotes the hydrolysis of glutamine to ammonia, which is used by the large (or ammonia) chain to synthesize carbamoyl phosphate. Tetramer of heterodimers (alpha,beta)4.

It carries out the reaction hydrogencarbonate + L-glutamine + 2 ATP + H2O = carbamoyl phosphate + L-glutamate + 2 ADP + phosphate + 2 H(+). The catalysed reaction is L-glutamine + H2O = L-glutamate + NH4(+). Its pathway is amino-acid biosynthesis; L-arginine biosynthesis; carbamoyl phosphate from bicarbonate: step 1/1. The protein operates within pyrimidine metabolism; UMP biosynthesis via de novo pathway; (S)-dihydroorotate from bicarbonate: step 1/3. Its function is as follows. Small subunit of the glutamine-dependent carbamoyl phosphate synthetase (CPSase). CPSase catalyzes the formation of carbamoyl phosphate from the ammonia moiety of glutamine, carbonate, and phosphate donated by ATP, constituting the first step of 2 biosynthetic pathways, one leading to arginine and/or urea and the other to pyrimidine nucleotides. The small subunit (glutamine amidotransferase) binds and cleaves glutamine to supply the large subunit with the substrate ammonia. This Yersinia pestis protein is Carbamoyl phosphate synthase small chain.